Here is a 282-residue protein sequence, read N- to C-terminus: Acetyl-coenzyme A carboxylase carboxyl transferase subunit beta 1 (282 aa).

The CoA carboxyltransferase N-terminal domain maps to 23 to 282 (LMTKCPECRH…MHTKGGVQHV (260 aa)). The Zn(2+) site is built by C27, C30, C46, and C49. The segment at 27–49 (CPECRHILLTKELEKNHKVCTKC) adopts a C4-type zinc-finger fold.

It belongs to the AccD/PCCB family. Acetyl-CoA carboxylase is a heterohexamer composed of biotin carboxyl carrier protein (AccB), biotin carboxylase (AccC) and two subunits each of ACCase subunit alpha (AccA) and ACCase subunit beta (AccD). It depends on Zn(2+) as a cofactor.

It is found in the cytoplasm. The catalysed reaction is N(6)-carboxybiotinyl-L-lysyl-[protein] + acetyl-CoA = N(6)-biotinyl-L-lysyl-[protein] + malonyl-CoA. Its pathway is lipid metabolism; malonyl-CoA biosynthesis; malonyl-CoA from acetyl-CoA: step 1/1. Component of the acetyl coenzyme A carboxylase (ACC) complex. Biotin carboxylase (BC) catalyzes the carboxylation of biotin on its carrier protein (BCCP) and then the CO(2) group is transferred by the transcarboxylase to acetyl-CoA to form malonyl-CoA. The protein is Acetyl-coenzyme A carboxylase carboxyl transferase subunit beta 1 of Lysinibacillus sphaericus (strain C3-41).